A 468-amino-acid polypeptide reads, in one-letter code: Tissue alpha-L-fucosidase (468 aa).

The signal sequence occupies residues 1–29; the sequence is MRAPGERWRPAGAALWLLLLLLLLGATES. Thr172 is modified (phosphothreonine). N-linked (GlcNAc...) asparagine glycosylation is found at Asn243, Asn270, and Asn384.

It belongs to the glycosyl hydrolase 29 family. In terms of assembly, homotetramer.

It localises to the lysosome. The enzyme catalyses an alpha-L-fucoside + H2O = L-fucose + an alcohol. The catalysed reaction is a neolactoside IV(2)-alpha-Fuc-nLc4Cer(d18:1(4E)) + H2O = a neolactoside nLc4Cer(d18:1(4E)) + L-fucose. It catalyses the reaction a neolactoside IV(2)-alpha-Fuc-nLc4Cer(d18:0) + H2O = a neolactoside nLc4Cer(d18:0) + L-fucose. Functionally, alpha-L-fucosidase is responsible for hydrolyzing the alpha-1,6-linked fucose joined to the reducing-end N-acetylglucosamine of the carbohydrate moieties of glycoproteins. This is Tissue alpha-L-fucosidase (FUCA1) from Macaca fascicularis (Crab-eating macaque).